Consider the following 308-residue polypeptide: Palmitoyltransferase ZDHHC7 (308 aa).

The Cytoplasmic segment spans residues 1 to 50 (MQPSGHRLRDIEHHPLLTDNDNYDSASSSSSETDMADRVWFIRDGCGMVC). The helical transmembrane segment at 51–71 (AVMTWLLVVYADFVVTFVMLL) threads the bilayer. At 72–75 (PSKD) the chain is on the lumenal side. Residues 76–96 (FWYSVVNGVLFNCLAVLALSS) traverse the membrane as a helical segment. Residues 97–173 (HLRTMLTDPG…NNCVGEKNQR (77 aa)) lie on the Cytoplasmic side of the membrane. In terms of domain architecture, DHHC spans 130 to 180 (YKCPKCCCIKPERAHHCSICKRCIRKMDHHCPWVNNCVGEKNQRFFVLFTM). Cys160 functions as the S-palmitoyl cysteine intermediate in the catalytic mechanism. A helical membrane pass occupies residues 174-194 (FFVLFTMYIALSSVHALILCG). Over 195 to 217 (LQFISCVRGQWTECSDFSPPITV) the chain is Lumenal. The helical transmembrane segment at 218 to 238 (ILLVFLCLEGLLFFTFTAVMF) threads the bilayer. The Cytoplasmic portion of the chain corresponds to 239–308 (GTQIHSICND…TRKGGPEFSV (70 aa)).

Belongs to the DHHC palmitoyltransferase family. In terms of assembly, homooligomers. Heterooligomers with ZDHHC3. In terms of processing, autopalmitoylated. In terms of tissue distribution, ubiquitously expressed, with highest levels in liver, kidney and brain. Expressed in all brain regions.

The protein localises to the golgi apparatus membrane. The catalysed reaction is L-cysteinyl-[protein] + hexadecanoyl-CoA = S-hexadecanoyl-L-cysteinyl-[protein] + CoA. It catalyses the reaction L-cysteinyl-[protein] + tetradecanoyl-CoA = S-tetradecanoyl-L-cysteinyl-[protein] + CoA. It carries out the reaction L-cysteinyl-[protein] + octadecanoyl-CoA = S-octadecanoyl-L-cysteinyl-[protein] + CoA. In terms of biological role, golgi-localized palmitoyltransferase that catalyzes the addition of palmitate onto various protein substrates and therefore functions in several unrelated biological processes. Has no stringent fatty acid selectivity and in addition to palmitate can also transfer onto target proteins myristate from tetradecanoyl-CoA and stearate from octadecanoyl-CoA. Palmitoylates sex steroid hormone receptors, including ESR1, PGR and AR, thereby regulating their targeting to the plasma membrane and their function in rapid intracellular signaling upon binding of sex hormones. Palmitoylates GNAQ, a heterotrimeric G protein, regulating its dynamic localization at the plasma membrane and is thereby involved in GNAQ-dependent G protein-coupled receptor signaling pathways. Also functions in ligand-induced cell death by regulating the FAS signaling pathway through the palmitoylation and stabilization of the receptor at the plasma membrane. In epithelial cells, palmitoylates SCRIB and regulates its localization to the plasma membrane, regulating indirectly cell polarity and differentiation. Also palmitoylates JAM3 and promotes its expression at tight junctions and regulates its function in cell migration. Palmitoylates the glucose transporter GLUT4/SLC2A4 and controls the insulin-dependent translocation of GLUT4 to the plasma membrane. In brain, could also palmitoylate SNAP25 and DLG4/PSD95. Could also palmitoylate DNAJC5 and regulate its localization to the Golgi membrane. Could also palmitoylate NCDN. May play a role in follicle stimulation hormone (FSH) activation of testicular Sertoli cells. Activates pyroptosis by catalyzing palmitoylation of gasdermin-D (GSDMD). The protein is Palmitoyltransferase ZDHHC7 of Mus musculus (Mouse).